A 198-amino-acid chain; its full sequence is Proteasome subunit beta type-2 (198 aa).

The protein belongs to the peptidase T1B family. In terms of assembly, the 26S proteasome consists of a 20S proteasome core and two 19S regulatory subunits. The 20S proteasome core is composed of 28 subunits that are arranged in four stacked rings, resulting in a barrel-shaped structure. The two end rings are each formed by seven alpha subunits, and the two central rings are each formed by seven beta subunits. The catalytic chamber with the active sites is on the inside of the barrel.

It is found in the cytoplasm. The protein localises to the nucleus. In terms of biological role, non-catalytic component of the proteasome, a multicatalytic proteinase complex which is characterized by its ability to cleave peptides with Arg, Phe, Tyr, Leu, and Glu adjacent to the leaving group at neutral or slightly basic pH. The proteasome has an ATP-dependent proteolytic activity. The sequence is that of Proteasome subunit beta type-2 (psmB2) from Dictyostelium discoideum (Social amoeba).